The following is a 306-amino-acid chain: Agmatinase (306 aa).

Residues H126, D149, H151, D153, D230, and D232 each coordinate Mn(2+).

The protein belongs to the arginase family. Agmatinase subfamily. Mn(2+) is required as a cofactor.

The enzyme catalyses agmatine + H2O = urea + putrescine. Its pathway is amine and polyamine biosynthesis; putrescine biosynthesis via agmatine pathway; putrescine from agmatine: step 1/1. Functionally, catalyzes the formation of putrescine from agmatine. The chain is Agmatinase from Escherichia coli (strain SE11).